Consider the following 891-residue polypeptide: Valine--tRNA ligase (891 aa).

The 'HIGH' region signature appears at 43 to 53; it reads PFTSGTLHLGH. The 'KMSKS' region signature appears at 536-540; that stretch reads KMSKS. Lysine 539 contacts ATP.

The protein belongs to the class-I aminoacyl-tRNA synthetase family. ValS type 2 subfamily.

Its subcellular location is the cytoplasm. The enzyme catalyses tRNA(Val) + L-valine + ATP = L-valyl-tRNA(Val) + AMP + diphosphate. Functionally, catalyzes the attachment of valine to tRNA(Val). As ValRS can inadvertently accommodate and process structurally similar amino acids such as threonine, to avoid such errors, it has a 'posttransfer' editing activity that hydrolyzes mischarged Thr-tRNA(Val) in a tRNA-dependent manner. This chain is Valine--tRNA ligase, found in Pyrococcus furiosus (strain ATCC 43587 / DSM 3638 / JCM 8422 / Vc1).